We begin with the raw amino-acid sequence, 232 residues long: MDSEARIKKIMEATGCSHDVARKAENESQGNLDLAIKIAGRKGNVLYSGGKSGLYVEERPSRKSITQYKNGILVEDKFYDFSVDDNIRLREMLEKKTFDASLLGLHGDTAEVIYTEKPDEEYRENSKAPEAKARPSFVGEGRRLGDSSREIPHVNIPDMLEIAKDGNVLFKVMIGSKRVTVRMLRSQTVGDFFDYIERYYDFGLVLSSNGKEIPPSHSVEEISNKLVLLSRR.

Residues 119–145 (DEEYRENSKAPEAKARPSFVGEGRRLG) are disordered. Residues 123-133 (RENSKAPEAKA) show a composition bias toward basic and acidic residues.

This is an uncharacterized protein from Encephalitozoon cuniculi (strain GB-M1) (Microsporidian parasite).